Here is a 247-residue protein sequence, read N- to C-terminus: Auxin-responsive protein IAA13 (247 aa).

The EAR-like (transcriptional repression) signature appears at 14–18 (LELGL). Over residues 25–40 (GTAAKIGKSGGGGAWG) the composition is skewed to gly residues. Disordered regions lie at residues 25-44 (GTAA…ERGR) and 49-119 (KDFP…PKDV). The span at 62–75 (SASHAGSSPPRSSS) shows a compositional bias: low complexity. A compositionally biased stretch (polar residues) spans 87–98 (RMNSLVNNQATK). Residues 106–119 (AGKKKVKDDEPKDV) are compositionally biased toward basic and acidic residues. A PB1 domain is found at 129–225 (VGFIKVNMDG…SVKRLRVMKT (97 aa)).

It belongs to the Aux/IAA family. As to quaternary structure, homodimers and heterodimers. Interacts with TPL. As to expression, preferentially expressed in stems.

It localises to the nucleus. Aux/IAA proteins are short-lived transcriptional factors that function as repressors of early auxin response genes at low auxin concentrations. Repression is thought to result from the interaction with auxin response factors (ARFs), proteins that bind to the auxin-responsive promoter element (AuxRE). Formation of heterodimers with ARF proteins may alter their ability to modulate early auxin response genes expression. The polypeptide is Auxin-responsive protein IAA13 (IAA13) (Arabidopsis thaliana (Mouse-ear cress)).